The chain runs to 216 residues: Cytochrome c biogenesis ATP-binding export protein CcmA (216 aa).

Positions 18-216 (LQVEGLAGRR…AHARTLEISA (199 aa)) constitute an ABC transporter domain. 50–57 (GHNGSGKT) is an ATP binding site.

The protein belongs to the ABC transporter superfamily. CcmA exporter (TC 3.A.1.107) family. In terms of assembly, the complex is composed of two ATP-binding proteins (CcmA) and two transmembrane proteins (CcmB).

It localises to the cell inner membrane. It catalyses the reaction heme b(in) + ATP + H2O = heme b(out) + ADP + phosphate + H(+). Part of the ABC transporter complex CcmAB involved in the biogenesis of c-type cytochromes; once thought to export heme, this seems not to be the case, but its exact role is uncertain. Responsible for energy coupling to the transport system. This Nitrosococcus oceani (strain ATCC 19707 / BCRC 17464 / JCM 30415 / NCIMB 11848 / C-107) protein is Cytochrome c biogenesis ATP-binding export protein CcmA.